The sequence spans 157 residues: Beta-defensin 125 (157 aa).

Positions 1 to 20 (MNILMLTFIICGLLTQVTKG) are cleaved as a signal peptide. Intrachain disulfides connect cysteine 27–cysteine 55, cysteine 35–cysteine 49, and cysteine 39–cysteine 56. Positions 109-157 (GETMTPETNTPETTVPPSETTTPETTMPPSETATSETMPPPSQTALTHN) are disordered. The segment covering 110-145 (ETMTPETNTPETTVPPSETTTPETTMPPSETATSET) has biased composition (low complexity).

Belongs to the beta-defensin family.

It localises to the secreted. Functionally, has antibacterial activity. The protein is Beta-defensin 125 (DEFB125) of Gorilla gorilla gorilla (Western lowland gorilla).